Reading from the N-terminus, the 186-residue chain is Methylamine dehydrogenase light chain (186 aa).

Residues 1–57 constitute a signal peptide (tat-type signal); that stretch reads MLGKSQFDDLFEKMSRKVAGHTSRRGFIGRVGTAVAGVALVPLLPVDRRGRVSRANA. Intrachain disulfides connect Cys-78–Cys-143, Cys-84–Cys-116, Cys-91–Cys-176, Cys-93–Cys-141, Cys-101–Cys-132, and Cys-133–Cys-164. The residue at position 112 (Trp-112) is a Tryptophylquinone. The tryptophan tryptophylquinone (Trp-Trp) cross-link spans 112-163; the sequence is WVASCYNPTDKQSYLISYRDCCGANVSGRCACLNTEGELPVYRPEFGNDIIW.

This sequence belongs to the aromatic amine dehydrogenase light chain family. In terms of assembly, heterotetramer of two light and two heavy chains. It depends on tryptophan tryptophylquinone residue as a cofactor. In terms of processing, predicted to be exported by the Tat system. The position of the signal peptide cleavage has been experimentally proven. Post-translationally, tryptophan tryptophylquinone (TTQ) is formed by oxidation of the indole ring of a tryptophan to form tryptophylquinone followed by covalent cross-linking with another tryptophan residue.

The protein localises to the periplasm. It carries out the reaction 2 oxidized [amicyanin] + methylamine + H2O = 2 reduced [amicyanin] + formaldehyde + NH4(+) + 2 H(+). It participates in one-carbon metabolism; methylamine degradation; formaldehyde from methylamine: step 1/1. Its function is as follows. Methylamine dehydrogenase carries out the oxidation of methylamine. Electrons are passed from methylamine dehydrogenase to amicyanin. The polypeptide is Methylamine dehydrogenase light chain (mauA) (Methylorubrum extorquens (strain ATCC 14718 / DSM 1338 / JCM 2805 / NCIMB 9133 / AM1) (Methylobacterium extorquens)).